The sequence spans 65 residues: Orally active insecticidal peptide-3 (65 aa).

Positions 1–21 are cleaved as a signal peptide; the sequence is MKTSVLFAILGLALLFCLSFG. Residues 22–29 constitute a propeptide that is removed on maturation; that stretch reads VELEETGR. Disulfide bonds link Cys31–Cys46, Cys38–Cys51, and Cys45–Cys58. A Proline amide modification is found at Pro62.

This sequence belongs to the neurotoxin 10 (Hwtx-1) family. 46 (Jztx-7/10/12) subfamily. As to expression, expressed by the venom gland.

It is found in the secreted. In terms of biological role, probable ion channel inhibitor. Shows insecticidal activity when injected into mealworms. The sequence is that of Orally active insecticidal peptide-3 from Selenotypus plumipes (Australian featherleg tarantula).